Here is a 104-residue protein sequence, read N- to C-terminus: L-rhamnose mutarotase (104 aa).

Tyr18 is a binding site for substrate. The active-site Proton donor is the His22. Substrate contacts are provided by residues Tyr41 and 76–77 (WW).

This sequence belongs to the rhamnose mutarotase family. Homodimer.

It is found in the cytoplasm. It carries out the reaction alpha-L-rhamnose = beta-L-rhamnose. The protein operates within carbohydrate metabolism; L-rhamnose metabolism. Involved in the anomeric conversion of L-rhamnose. The polypeptide is L-rhamnose mutarotase (Lachnoclostridium phytofermentans (strain ATCC 700394 / DSM 18823 / ISDg) (Clostridium phytofermentans)).